The sequence spans 293 residues: 4-hydroxy-tetrahydrodipicolinate synthase (293 aa).

Thr-50 contributes to the pyruvate binding site. The active-site Proton donor/acceptor is the Tyr-138. Residue Lys-166 is the Schiff-base intermediate with substrate of the active site. Residue Val-206 coordinates pyruvate.

This sequence belongs to the DapA family. In terms of assembly, homotetramer; dimer of dimers.

Its subcellular location is the cytoplasm. The enzyme catalyses L-aspartate 4-semialdehyde + pyruvate = (2S,4S)-4-hydroxy-2,3,4,5-tetrahydrodipicolinate + H2O + H(+). The protein operates within amino-acid biosynthesis; L-lysine biosynthesis via DAP pathway; (S)-tetrahydrodipicolinate from L-aspartate: step 3/4. Its function is as follows. Catalyzes the condensation of (S)-aspartate-beta-semialdehyde [(S)-ASA] and pyruvate to 4-hydroxy-tetrahydrodipicolinate (HTPA). The chain is 4-hydroxy-tetrahydrodipicolinate synthase from Cutibacterium acnes (strain DSM 16379 / KPA171202) (Propionibacterium acnes).